A 583-amino-acid polypeptide reads, in one-letter code: uncharacterized protein (583 aa).

One can recognise an FAD-binding FR-type domain in the interval 162 to 424 (YGIFAAPILD…RGVQQNPFAK (263 aa)).

It belongs to the flavoprotein pyridine nucleotide cytochrome reductase family. It depends on FAD as a cofactor.

It localises to the mitochondrion. This is an uncharacterized protein from Schizosaccharomyces pombe (strain 972 / ATCC 24843) (Fission yeast).